A 1217-amino-acid polypeptide reads, in one-letter code: DNA-directed RNA polymerase subunit beta' (1217 aa).

Cysteine 60, cysteine 62, cysteine 75, and cysteine 78 together coordinate Zn(2+). Mg(2+)-binding residues include aspartate 449, aspartate 451, and aspartate 453. Zn(2+) is bound by residues cysteine 821, cysteine 895, cysteine 902, and cysteine 905.

The protein belongs to the RNA polymerase beta' chain family. In terms of assembly, the RNAP catalytic core consists of 2 alpha, 1 beta, 1 beta' and 1 omega subunit. When a sigma factor is associated with the core the holoenzyme is formed, which can initiate transcription. The cofactor is Mg(2+). It depends on Zn(2+) as a cofactor.

The catalysed reaction is RNA(n) + a ribonucleoside 5'-triphosphate = RNA(n+1) + diphosphate. DNA-dependent RNA polymerase catalyzes the transcription of DNA into RNA using the four ribonucleoside triphosphates as substrates. The protein is DNA-directed RNA polymerase subunit beta' of Lactobacillus helveticus (strain DPC 4571).